A 236-amino-acid polypeptide reads, in one-letter code: Ubiquinone biosynthesis O-methyltransferase (236 aa).

S-adenosyl-L-methionine contacts are provided by R40, G59, D80, and L124.

It belongs to the methyltransferase superfamily. UbiG/COQ3 family.

It carries out the reaction a 3-demethylubiquinol + S-adenosyl-L-methionine = a ubiquinol + S-adenosyl-L-homocysteine + H(+). The catalysed reaction is a 3-(all-trans-polyprenyl)benzene-1,2-diol + S-adenosyl-L-methionine = a 2-methoxy-6-(all-trans-polyprenyl)phenol + S-adenosyl-L-homocysteine + H(+). The protein operates within cofactor biosynthesis; ubiquinone biosynthesis. Its function is as follows. O-methyltransferase that catalyzes the 2 O-methylation steps in the ubiquinone biosynthetic pathway. The chain is Ubiquinone biosynthesis O-methyltransferase from Nitrosococcus oceani (strain ATCC 19707 / BCRC 17464 / JCM 30415 / NCIMB 11848 / C-107).